A 377-amino-acid polypeptide reads, in one-letter code: MFFTEQHELIRKLARDFAEQEIEPIADEVDKTAEFPKEIVKKMAQNGFFGIKMPKEYGGAGADNRAYVTIMEEISRASGVAGIYLSSPNSLLGTPFLLVGTDEQKEKYLKPMIRGEKTLAFALTEPGAGSDAGAVATTAREEGDYYILNGRKTFITGAPISDNIIVFAKTDMSKGTKGITTFIVDSKQEGVSFGKPEDKMGMIGCPTSDIILENVKVHKSDILGELNKGFITAMKTLSVGRIGVAAQALGIAQAAVDEAVKYAKQRKQFNRPIAKFQAIQFKLANMETKLNAAKLLVYNAAYKMDCGEKADKEASMAKYFAAESAIQIVNDALQIHGGYGYIKDYKIERLYRDVRVIAIYEGTSEVQQMVIASNLLK.

Residues 121 to 130 (FALTEPGAGS), 154 to 156 (FIT), arginine 266, glutamine 277, and 334 to 338 (QIHGG) each bind FAD. Residue glutamate 361 is the Proton acceptor of the active site. 363–365 (TSE) contributes to the FAD binding site.

This sequence belongs to the acyl-CoA dehydrogenase family. The cofactor is FAD.

It carries out the reaction 3-phenylpropanoate + oxidized [electron-transfer flavoprotein] + H(+) = (E)-cinnamate + reduced [electron-transfer flavoprotein]. The enzyme catalyses phloretate + oxidized [electron-transfer flavoprotein] + H(+) = (E)-4-coumarate + reduced [electron-transfer flavoprotein]. The catalysed reaction is indole-3-propanoate + oxidized [electron-transfer flavoprotein] + H(+) = (E)-3-(indol-3-yl)acrylate + reduced [electron-transfer flavoprotein]. The protein operates within amino-acid degradation. Essential for the reductive metabolism of L-phenylalanine, L-tyrosine and L-tryptophan. Catalyzes the reduction of phenylacrylic acid to phenylpropionic acid, 4-hydroxy-phenylacrylic acid to 4-hydroxy-phenylpropionic acid, and indoleacrylic acid to indolepropionic acid. This is 3-(aryl)acrylate reductase from Clostridium sporogenes (strain ATCC 15579).